A 355-amino-acid chain; its full sequence is uncharacterized protein (355 aa).

The protein resides in the cytoplasm. This is an uncharacterized protein from Saccharomyces cerevisiae (strain ATCC 204508 / S288c) (Baker's yeast).